A 533-amino-acid polypeptide reads, in one-letter code: Protein disulfide isomerase-like 1-5 (533 aa).

A signal peptide spans 1 to 22 (MRARRVVAAAAVLLLFAVVAVA). Thioredoxin domains lie at 51–196 (LGGG…KDQT) and 387–516 (LLEG…EKLQ). The active-site Nucleophile is cysteine 97. The N-linked (GlcNAc...) asparagine glycan is linked to asparagine 151. Active-site nucleophile residues include cysteine 436 and cysteine 439. Cysteine 436 and cysteine 439 form a disulfide bridge. The Prevents secretion from ER signature appears at 530–533 (KDEL).

This sequence belongs to the protein disulfide isomerase family.

The protein resides in the endoplasmic reticulum lumen. The enzyme catalyses Catalyzes the rearrangement of -S-S- bonds in proteins.. Functionally, acts as a protein-folding catalyst that interacts with nascent polypeptides to catalyze the formation, isomerization, and reduction or oxidation of disulfide bonds. May play a role in storage protein biogenesis. The chain is Protein disulfide isomerase-like 1-5 (PDIL1-5) from Oryza sativa subsp. japonica (Rice).